The following is a 487-amino-acid chain: 26S proteasome non-ATPase regulatory subunit 3 homolog B (487 aa).

Residues 1–21 are disordered; sequence MTQDVEMKDNQTPTQSVVSAP. Positions 10-21 are enriched in polar residues; sequence NQTPTQSVVSAP. One can recognise a PCI domain in the interval 239–420; the sequence is CRYLFYLGKI…GCMVSKETGD (182 aa). Residues 452–487 form a disordered region; it reads PPNTHREKESEEKRREMKQQEEELAKYMAEEDDDDF. A compositionally biased stretch (basic and acidic residues) spans 455 to 480; sequence THREKESEEKRREMKQQEEELAKYMA.

The protein belongs to the proteasome subunit S3 family. In terms of assembly, component of the 19S regulatory particle (RP/PA700) lid subcomplex of the 26S proteasome. The 26S proteasome is composed of a core protease (CP), known as the 20S proteasome, capped at one or both ends by the 19S regulatory particle (RP/PA700). The RP/PA700 complex is composed of at least 17 different subunits in two subcomplexes, the base and the lid, which form the portions proximal and distal to the 20S proteolytic core, respectively. Interacts with UCH1 and UCH2. As to expression, preferentially expressed in flowers.

In terms of biological role, acts as a regulatory subunit of the 26 proteasome which is involved in the ATP-dependent degradation of ubiquitinated proteins. This is 26S proteasome non-ATPase regulatory subunit 3 homolog B from Arabidopsis thaliana (Mouse-ear cress).